Here is a 156-residue protein sequence, read N- to C-terminus: Small ribosomal subunit protein uS7 (156 aa).

The protein belongs to the universal ribosomal protein uS7 family. As to quaternary structure, part of the 30S ribosomal subunit. Contacts proteins S9 and S11.

In terms of biological role, one of the primary rRNA binding proteins, it binds directly to 16S rRNA where it nucleates assembly of the head domain of the 30S subunit. Is located at the subunit interface close to the decoding center, probably blocks exit of the E-site tRNA. This is Small ribosomal subunit protein uS7 from Paramagnetospirillum magneticum (strain ATCC 700264 / AMB-1) (Magnetospirillum magneticum).